A 91-amino-acid polypeptide reads, in one-letter code: Small ribosomal subunit protein bS18 (91 aa).

This sequence belongs to the bacterial ribosomal protein bS18 family. As to quaternary structure, part of the 30S ribosomal subunit. Forms a tight heterodimer with protein bS6.

Functionally, binds as a heterodimer with protein bS6 to the central domain of the 16S rRNA, where it helps stabilize the platform of the 30S subunit. The chain is Small ribosomal subunit protein bS18 from Paraburkholderia phymatum (strain DSM 17167 / CIP 108236 / LMG 21445 / STM815) (Burkholderia phymatum).